A 269-amino-acid polypeptide reads, in one-letter code: Shikimate dehydrogenase (NADP(+)) (269 aa).

Shikimate-binding positions include 14–16 and Thr61; that span reads SLS. The Proton acceptor role is filled by Lys65. Glu76 contributes to the NADP(+) binding site. Shikimate-binding residues include Asn85 and Asp99. NADP(+) contacts are provided by residues 123 to 127, 146 to 151, and Ile209; these read GAGGA and NRTPER. Tyr211 contributes to the shikimate binding site. Gly231 contacts NADP(+).

Belongs to the shikimate dehydrogenase family. Homodimer.

It carries out the reaction shikimate + NADP(+) = 3-dehydroshikimate + NADPH + H(+). The protein operates within metabolic intermediate biosynthesis; chorismate biosynthesis; chorismate from D-erythrose 4-phosphate and phosphoenolpyruvate: step 4/7. Involved in the biosynthesis of the chorismate, which leads to the biosynthesis of aromatic amino acids. Catalyzes the reversible NADPH linked reduction of 3-dehydroshikimate (DHSA) to yield shikimate (SA). This Methanothrix thermoacetophila (strain DSM 6194 / JCM 14653 / NBRC 101360 / PT) (Methanosaeta thermophila) protein is Shikimate dehydrogenase (NADP(+)).